The primary structure comprises 88 residues: Small ribosomal subunit protein bS16c (88 aa).

It belongs to the bacterial ribosomal protein bS16 family.

It is found in the plastid. The protein resides in the chloroplast. The polypeptide is Small ribosomal subunit protein bS16c (Jasminum nudiflorum (Winter jasmine)).